The chain runs to 179 residues: MARLQQHFREKLAPELMAKFGYTSPMQVPRLTKITLNMGVSEAVADKKVMDHAVSDLGKIAGQKPVVTMSKKAIAGFKIRENQAIGCMVTLRGVQMFEFLDRFVTVALPRVRDFRGISGRAFDGRGNYNIGVKEQIIFPEIEYDKVDALRGLNISITTTAKTDEECKALLTGFRFPFKN.

It belongs to the universal ribosomal protein uL5 family. In terms of assembly, part of the 50S ribosomal subunit; part of the 5S rRNA/L5/L18/L25 subcomplex. Contacts the 5S rRNA and the P site tRNA. Forms a bridge to the 30S subunit in the 70S ribosome.

This is one of the proteins that bind and probably mediate the attachment of the 5S RNA into the large ribosomal subunit, where it forms part of the central protuberance. In the 70S ribosome it contacts protein S13 of the 30S subunit (bridge B1b), connecting the 2 subunits; this bridge is implicated in subunit movement. Contacts the P site tRNA; the 5S rRNA and some of its associated proteins might help stabilize positioning of ribosome-bound tRNAs. The sequence is that of Large ribosomal subunit protein uL5 from Albidiferax ferrireducens (strain ATCC BAA-621 / DSM 15236 / T118) (Rhodoferax ferrireducens).